The following is a 259-amino-acid chain: Small ribosomal subunit protein uS2 (259 aa).

It belongs to the universal ribosomal protein uS2 family.

The chain is Small ribosomal subunit protein uS2 from Dinoroseobacter shibae (strain DSM 16493 / NCIMB 14021 / DFL 12).